Reading from the N-terminus, the 334-residue chain is Nucleoid-associated protein Pfl01_0983 (334 aa).

Belongs to the YejK family.

It is found in the cytoplasm. Its subcellular location is the nucleoid. The chain is Nucleoid-associated protein Pfl01_0983 from Pseudomonas fluorescens (strain Pf0-1).